A 684-amino-acid polypeptide reads, in one-letter code: Ubinuclein-1 (684 aa).

5 disordered regions span residues 108–137 (YKGN…FIDD), 157–287 (YVNR…LGKS), 311–332 (NVTG…VKSK), 609–631 (MVDR…CNPT), and 660–684 (PQTR…NLPS). Residues 114 to 137 (SDGEELDGAPDDDEYDTEDSFIDD) show a composition bias toward acidic residues. Composition is skewed to basic and acidic residues over residues 157 to 167 (YVNRGKLERME) and 184 to 199 (SAKP…DKHT). A compositionally biased stretch (polar residues) spans 211 to 235 (STAPGSWKTQESPLPSGAQDANTSV). Basic and acidic residues predominate over residues 238-260 (DDVKHSDRANHQSRNDTSHKSRE). 4 stretches are compositionally biased toward polar residues: residues 261–284 (TGSS…TSLL), 311–321 (NVTGSRQSSQA), 611–631 (DRSN…CNPT), and 669–684 (QNLN…NLPS).

The protein belongs to the ubinuclein family. As to quaternary structure, component of the HIRA complex made of UBN1, UBN2, ASF1A, CABIN1 and HIRA. Interacts with HIRA.

The protein localises to the nucleus. It is found in the nucleolus. May be required for replication-independent chromatin assembly. In Arabidopsis thaliana (Mouse-ear cress), this protein is Ubinuclein-1.